The following is a 280-amino-acid chain: Phosphatidylglycerol--prolipoprotein diacylglyceryl transferase (280 aa).

Helical transmembrane passes span 30–50, 71–91, 106–126, and 132–152; these read WYGLAYVVGILLGWFYARRIV, FLLWAAGGIVLGGRIGYILFY, IWNGGMSFHGGLVGTTLAMII, and AIPIWSLFDVVAAVVPIGLFF. Residue arginine 154 participates in a 1,2-diacyl-sn-glycero-3-phospho-(1'-sn-glycerol) binding. A run of 3 helical transmembrane segments spans residues 188 to 208, 217 to 237, and 251 to 271; these read QLYEAALEGLVLLAVLAWFVY, GLVTGIFVCGYAASRIFVEFF, and WLTMGMVLSVPMALIGIWAIA.

This sequence belongs to the Lgt family.

It is found in the cell inner membrane. The enzyme catalyses L-cysteinyl-[prolipoprotein] + a 1,2-diacyl-sn-glycero-3-phospho-(1'-sn-glycerol) = an S-1,2-diacyl-sn-glyceryl-L-cysteinyl-[prolipoprotein] + sn-glycerol 1-phosphate + H(+). Its pathway is protein modification; lipoprotein biosynthesis (diacylglyceryl transfer). Its function is as follows. Catalyzes the transfer of the diacylglyceryl group from phosphatidylglycerol to the sulfhydryl group of the N-terminal cysteine of a prolipoprotein, the first step in the formation of mature lipoproteins. This chain is Phosphatidylglycerol--prolipoprotein diacylglyceryl transferase, found in Sinorhizobium medicae (strain WSM419) (Ensifer medicae).